Consider the following 200-residue polypeptide: Rho GDP-dissociation inhibitor 2 (200 aa).

Residues 1–39 form a disordered region; the sequence is MTEKDAQPQLEEADDDLDSKLNYKPPPQKSLKELQEMDK. Residue T2 is modified to N-acetylthreonine. Position 20 is an N6-acetyllysine (K20). Y23 is modified (phosphotyrosine). N6-acetyllysine occurs at positions 24, 39, 46, 101, and 123. Residues 30 to 39 show a composition bias toward basic and acidic residues; sequence SLKELQEMDK. S144 is subject to Phosphoserine. N6-acetyllysine is present on K174.

It belongs to the Rho GDI family. As to quaternary structure, interacts with RHOA. Interacts with RAC1. Interacts with RAC2. Interacts with CDC42. In terms of tissue distribution, preferentially expressed in hematopoietic cells.

The protein resides in the cytoplasm. Its subcellular location is the cytosol. Its function is as follows. Regulates the GDP/GTP exchange reaction of the Rho proteins by inhibiting the dissociation of GDP from them, and the subsequent binding of GTP to them. Regulates reorganization of the actin cytoskeleton mediated by Rho family members. This Mus musculus (Mouse) protein is Rho GDP-dissociation inhibitor 2 (Arhgdib).